A 291-amino-acid chain; its full sequence is Heterogeneous nuclear ribonucleoprotein D-like-B (291 aa).

RRM domains are found at residues 34–116 (SKMF…QGKE) and 119–196 (KKVF…AAQP). The interval 196–226 (PKEVYRQQQQKQQKGGRGGTRGRGRGQGYSN) is disordered. Residues 210–222 (GGRGGTRGRGRGQ) are compositionally biased toward gly residues.

Its subcellular location is the nucleus. The protein resides in the cytoplasm. Acts as a transcriptional regulator. Binds DNA and RNA. The protein is Heterogeneous nuclear ribonucleoprotein D-like-B (hnrnpdl-b) of Xenopus laevis (African clawed frog).